Here is a 61-residue protein sequence, read N- to C-terminus: Small ribosomal subunit protein uS14 (61 aa).

Zn(2+) contacts are provided by cysteine 24, cysteine 27, cysteine 40, and cysteine 43.

It belongs to the universal ribosomal protein uS14 family. Zinc-binding uS14 subfamily. As to quaternary structure, part of the 30S ribosomal subunit. Contacts proteins S3 and S10. Zn(2+) serves as cofactor.

Its function is as follows. Binds 16S rRNA, required for the assembly of 30S particles and may also be responsible for determining the conformation of the 16S rRNA at the A site. The sequence is that of Small ribosomal subunit protein uS14 from Mycoplasma capricolum subsp. capricolum (strain California kid / ATCC 27343 / NCTC 10154).